The following is a 240-amino-acid chain: MSYTIYPAIDIRAGKCVRLEQGDYNKETIYGESPYKMAKSFQDAGAKWVHVVDLDGAKAKRPVNDEAILTIAQKLDVPVQVGGGIRTEQDIDRYINGGVARVVLGSVAVYQPDFTKQMLAKYGEQMAIGIDARDGYVATEGWLETSHVKAEDLAAEMARFGAKTFIFTDIARDGMLTGPNIEACVALSKAANANVIASGGVSSIADLAQLRAASLAGAIVGKALYTKRFTLEEALAEGEL.

Asp-10 acts as the Proton acceptor in catalysis. Residue Asp-131 is the Proton donor of the active site.

Belongs to the HisA/HisF family.

The protein localises to the cytoplasm. It catalyses the reaction 1-(5-phospho-beta-D-ribosyl)-5-[(5-phospho-beta-D-ribosylamino)methylideneamino]imidazole-4-carboxamide = 5-[(5-phospho-1-deoxy-D-ribulos-1-ylimino)methylamino]-1-(5-phospho-beta-D-ribosyl)imidazole-4-carboxamide. The protein operates within amino-acid biosynthesis; L-histidine biosynthesis; L-histidine from 5-phospho-alpha-D-ribose 1-diphosphate: step 4/9. The protein is 1-(5-phosphoribosyl)-5-[(5-phosphoribosylamino)methylideneamino] imidazole-4-carboxamide isomerase of Shouchella clausii (strain KSM-K16) (Alkalihalobacillus clausii).